The sequence spans 335 residues: Holliday junction branch migration complex subunit RuvB (335 aa).

Residues 4–184 (ADRLVSAEVL…FGIVQRLEFY (181 aa)) form a large ATPase domain (RuvB-L) region. Residues isoleucine 23, arginine 24, glycine 65, lysine 68, threonine 69, threonine 70, 131–133 (EDY), arginine 174, tyrosine 184, and arginine 221 each bind ATP. A Mg(2+)-binding site is contributed by threonine 69. Residues 185–255 (NVDDLQSIVS…IATRALDMLS (71 aa)) are small ATPAse domain (RuvB-S). The tract at residues 258–335 (AAGFDYLDRK…RHFGMVRNQE (78 aa)) is head domain (RuvB-H). The DNA site is built by arginine 294, arginine 313, and arginine 318.

This sequence belongs to the RuvB family. As to quaternary structure, homohexamer. Forms an RuvA(8)-RuvB(12)-Holliday junction (HJ) complex. HJ DNA is sandwiched between 2 RuvA tetramers; dsDNA enters through RuvA and exits via RuvB. An RuvB hexamer assembles on each DNA strand where it exits the tetramer. Each RuvB hexamer is contacted by two RuvA subunits (via domain III) on 2 adjacent RuvB subunits; this complex drives branch migration. In the full resolvosome a probable DNA-RuvA(4)-RuvB(12)-RuvC(2) complex forms which resolves the HJ.

Its subcellular location is the cytoplasm. The enzyme catalyses ATP + H2O = ADP + phosphate + H(+). Functionally, the RuvA-RuvB-RuvC complex processes Holliday junction (HJ) DNA during genetic recombination and DNA repair, while the RuvA-RuvB complex plays an important role in the rescue of blocked DNA replication forks via replication fork reversal (RFR). RuvA specifically binds to HJ cruciform DNA, conferring on it an open structure. The RuvB hexamer acts as an ATP-dependent pump, pulling dsDNA into and through the RuvAB complex. RuvB forms 2 homohexamers on either side of HJ DNA bound by 1 or 2 RuvA tetramers; 4 subunits per hexamer contact DNA at a time. Coordinated motions by a converter formed by DNA-disengaged RuvB subunits stimulates ATP hydrolysis and nucleotide exchange. Immobilization of the converter enables RuvB to convert the ATP-contained energy into a lever motion, pulling 2 nucleotides of DNA out of the RuvA tetramer per ATP hydrolyzed, thus driving DNA branch migration. The RuvB motors rotate together with the DNA substrate, which together with the progressing nucleotide cycle form the mechanistic basis for DNA recombination by continuous HJ branch migration. Branch migration allows RuvC to scan DNA until it finds its consensus sequence, where it cleaves and resolves cruciform DNA. The sequence is that of Holliday junction branch migration complex subunit RuvB from Photorhabdus laumondii subsp. laumondii (strain DSM 15139 / CIP 105565 / TT01) (Photorhabdus luminescens subsp. laumondii).